The sequence spans 1588 residues: uncharacterized protein (1588 aa).

Over residues 486–495 the composition is skewed to basic and acidic residues; the sequence is RKRLTSKTED. Disordered stretches follow at residues 486-515 and 1146-1176; these read RKRL…KRRP and GGQD…RELN. Over residues 498 to 507 the composition is skewed to polar residues; the sequence is NQWTRDCQNS. Over residues 1150-1169 the composition is skewed to low complexity; the sequence is NVSDQSENQSENQSLESETS.

The protein localises to the virion. This is an uncharacterized protein from Acanthamoeba polyphaga (Amoeba).